A 552-amino-acid polypeptide reads, in one-letter code: Esterase E4 (552 aa).

An N-terminal signal peptide occupies residues 1–23; sequence MKNTCGILLNLFLFIGCFLTCSA. The N-linked (GlcNAc...) asparagine glycan is linked to N81. Residues C89 and C106 are joined by a disulfide bond. S214 (acyl-ester intermediate) is an active-site residue. C266 and C277 are joined by a disulfide. The N-linked (GlcNAc...) asparagine glycan is linked to N269. E339 acts as the Charge relay system in catalysis. Residues N371, N404, and N443 are each glycosylated (N-linked (GlcNAc...) asparagine). The Charge relay system role is filled by H463.

This sequence belongs to the type-B carboxylesterase/lipase family.

It carries out the reaction a carboxylic ester + H2O = an alcohol + a carboxylate + H(+). Overproduction of nonspecific esterases is a common mechanism of resistance to organophosphate insecticides. The sequence is that of Esterase E4 from Myzus persicae (Green peach aphid).